The primary structure comprises 227 residues: Urease accessory protein UreE (227 aa).

The segment at 192 to 227 (PHGSGLHVHAIHSHGHSHSHDHDHDHNHDHDHKHKQ) is disordered. Residues 209 to 221 (HSHDHDHDHNHDH) are compositionally biased toward basic and acidic residues.

The protein belongs to the UreE family.

The protein resides in the cytoplasm. Functionally, involved in urease metallocenter assembly. Binds nickel. Probably functions as a nickel donor during metallocenter assembly. The sequence is that of Urease accessory protein UreE from Yersinia bercovieri.